Here is a 186-residue protein sequence, read N- to C-terminus: Ribosome-recycling factor (186 aa).

The protein belongs to the RRF family.

The protein localises to the cytoplasm. In terms of biological role, responsible for the release of ribosomes from messenger RNA at the termination of protein biosynthesis. May increase the efficiency of translation by recycling ribosomes from one round of translation to another. The protein is Ribosome-recycling factor of Rickettsia felis (strain ATCC VR-1525 / URRWXCal2) (Rickettsia azadi).